A 319-amino-acid polypeptide reads, in one-letter code: Lipase 1 (319 aa).

Serine 189 (nucleophile) is an active-site residue. Ca(2+) contacts are provided by aspartate 314 and aspartate 317.

The catalysed reaction is a triacylglycerol + H2O = a diacylglycerol + a fatty acid + H(+). The sequence is that of Lipase 1 (lip1) from Moraxella sp. (strain TA144).